Consider the following 407-residue polypeptide: MMDGTKGFEDALTGEQKIRNFNINFGPQHPAAHGVLRLVLELDGEIVERCDPHIGLLHRGTEKLMESRTYLQNLPYFDRLDYVAPMNQEHAWCLAIEKLTGVEVPRRASLIRVLFCEIGRILNHILNITTQAMDVGALTPPLWGFEEREKLMVFYERASGARLHAAYFRPGGVHQDLPPALIDDIETWAHEFPRVIDDIDGLLTENRIFKQRNADIGVVTEEDILEYGFSGVMVRGSGLAWDLRRAQPYERYDEFDFQIPIGKNGDCYDRYLVRMEEMRQSLSIILQAIAKLRAPEGQGDVLARGKITPPSRSDMKTSMESLIHHFKLYTEGFHVPAGEVYACVEAPKGEFGVYLVADGTNKPYRAKIRAPGFLHLQAMDHMSRGHQLADVAAIIGTMDVVFGEIDR.

The protein belongs to the complex I 49 kDa subunit family. In terms of assembly, NDH-1 is composed of 14 different subunits. Subunits NuoB, C, D, E, F, and G constitute the peripheral sector of the complex.

It localises to the cell inner membrane. The catalysed reaction is a quinone + NADH + 5 H(+)(in) = a quinol + NAD(+) + 4 H(+)(out). Functionally, NDH-1 shuttles electrons from NADH, via FMN and iron-sulfur (Fe-S) centers, to quinones in the respiratory chain. The immediate electron acceptor for the enzyme in this species is believed to be ubiquinone. Couples the redox reaction to proton translocation (for every two electrons transferred, four hydrogen ions are translocated across the cytoplasmic membrane), and thus conserves the redox energy in a proton gradient. In Roseobacter denitrificans (strain ATCC 33942 / OCh 114) (Erythrobacter sp. (strain OCh 114)), this protein is NADH-quinone oxidoreductase subunit D.